A 263-amino-acid polypeptide reads, in one-letter code: Auxin-responsive protein IAA3 (263 aa).

2 disordered regions span residues 1–54 and 76–121; these read MSPP…RRPA and RVFP…PAAK. Basic and acidic residues predominate over residues 28–38; sequence RADDVDLKGTE. Positions 39-43 match the EAR-like (transcriptional repression) motif; it reads LRLGL. The PB1 domain maps to 158 to 245; sequence FLYVKVSMDG…SCRRLRIMKG (88 aa).

The protein belongs to the Aux/IAA family. Homodimers and heterodimers. Highly expressed in flowers. Expressed in roots and shoots.

The protein localises to the nucleus. Its function is as follows. Aux/IAA proteins are short-lived transcriptional factors that function as repressors of early auxin response genes at low auxin concentrations. In Oryza sativa subsp. japonica (Rice), this protein is Auxin-responsive protein IAA3 (IAA3).